The chain runs to 268 residues: MKPNNRTCDVITNKDESLPALLLPALNSYTCDDSLLKGQISSNGRYQPFGFSDCSLLPKRLNIQAGQGSMPVSSIQCADHSYSNWQKESEKTKLPKLGCPTEYTEYYKTVSSGETTDSAVVSSIATNRLKRKRQRDGPSCDSCRIKKIKCNATIIIFLQDRNLISSISSNLHYTLSQDDINQFRMKFFRKLPDVMGTYEVIKHLDKIVLFKACTSCSRRNQKNGKCLFSRGFTKSDMNVFPKINSKLKDKSIFEMTVDDYVAAGFQTL.

The protein belongs to the SUT1 family.

The protein localises to the nucleus. Its function is as follows. Putative transcription factor involved in the regulation of the activity of the cAMP/protein kinase A pathway. Involved in sterol uptake. With SUT1, positively regulates mating by repressing the expression of the mating inhibitors NCE102, PRR2 and RHO5 in response to pheromone. This is Sterol uptake protein 2 from Saccharomyces cerevisiae (strain ATCC 204508 / S288c) (Baker's yeast).